Consider the following 1233-residue polypeptide: Pesticidal crystal protein Cry1Bc (1233 aa).

It belongs to the delta endotoxin family.

Promotes colloidosmotic lysis by binding to the midgut epithelial cells of insects. The chain is Pesticidal crystal protein Cry1Bc (cry1Bc) from Bacillus thuringiensis subsp. morrisoni.